Reading from the N-terminus, the 275-residue chain is LIM/homeobox protein Awh (275 aa).

LIM zinc-binding domains lie at 6–67 and 68–129; these read RSCA…NFGA and KCSK…TVEG. The residue at position 126 (Thr126) is a Phosphothreonine. The homeobox DNA-binding region spans 148-207; the sequence is TKRVRTTFTEEQLQVLQANFQIDSNPDGQDLERIASVTGLSKRVTQVWFQNSRARQKKHI. Residues 253–275 are disordered; that stretch reads PTHESSMDELSQDSSVHCMPSEV.

In terms of tissue distribution, first detected in neuroblasts in stage 9 embryos. Expressed in all 10 abdominal segments and in the labial segment during early embryogenesis. Expressed in the stage 14 developing epithelium. By embryonic stage 16, expression is refined to the abdominal histoblasts and salivary gland imaginal ring cells. Expressed in both larval and imaginal cells between the salivary gland and the salivary gland imaginal ring, in late third instar larvae. Also expressed in specific areas of the larval wing, leg and eye-antennal disks.

The protein resides in the nucleus. Functionally, probable transcription factor. Required for the establishment of a subset of imaginal tissues: the abdominal histoblasts and the salivary gland imaginal rings. This is LIM/homeobox protein Awh from Drosophila melanogaster (Fruit fly).